The chain runs to 100 residues: Aspartyl/glutamyl-tRNA(Asn/Gln) amidotransferase subunit C (100 aa).

It belongs to the GatC family. Heterotrimer of A, B and C subunits.

The enzyme catalyses L-glutamyl-tRNA(Gln) + L-glutamine + ATP + H2O = L-glutaminyl-tRNA(Gln) + L-glutamate + ADP + phosphate + H(+). The catalysed reaction is L-aspartyl-tRNA(Asn) + L-glutamine + ATP + H2O = L-asparaginyl-tRNA(Asn) + L-glutamate + ADP + phosphate + 2 H(+). Functionally, allows the formation of correctly charged Asn-tRNA(Asn) or Gln-tRNA(Gln) through the transamidation of misacylated Asp-tRNA(Asn) or Glu-tRNA(Gln) in organisms which lack either or both of asparaginyl-tRNA or glutaminyl-tRNA synthetases. The reaction takes place in the presence of glutamine and ATP through an activated phospho-Asp-tRNA(Asn) or phospho-Glu-tRNA(Gln). The protein is Aspartyl/glutamyl-tRNA(Asn/Gln) amidotransferase subunit C of Streptococcus uberis (strain ATCC BAA-854 / 0140J).